The sequence spans 382 residues: F-box protein At3g19470 (382 aa).

The 44-residue stretch at 1 to 44 (MYNLPRDLPEEVLCRIPLTSLRPVRSTCKKWSTLSKCGSFAKKH) folds into the F-box domain.

In Arabidopsis thaliana (Mouse-ear cress), this protein is F-box protein At3g19470.